We begin with the raw amino-acid sequence, 290 residues long: Iron-sulfur cluster carrier protein (290 aa).

47–54 (GKGGVGKS) contributes to the ATP binding site.

It belongs to the Mrp/NBP35 ATP-binding proteins family. Homodimer.

Binds and transfers iron-sulfur (Fe-S) clusters to target apoproteins. Can hydrolyze ATP. The chain is Iron-sulfur cluster carrier protein from Methanocaldococcus jannaschii (strain ATCC 43067 / DSM 2661 / JAL-1 / JCM 10045 / NBRC 100440) (Methanococcus jannaschii).